Reading from the N-terminus, the 273-residue chain is MGRHNENIGHQARKRFGQNFLHDQGVIDRIVRSINPKSDQNLVEIGPGLGALTEELLKSGGSVTAVELDRDLTPILRTKFFNYPQFNVIEADALKFDFTQLATPERPMRLIGNLPYNISTPLIFHLLTFRGLVQDMYFMLQKEVVDRLAAKPGEDAYGRLGVMAQYYCKVESLFNVGPGAFQPAPKVWSAIVRLTPYTEPPLACKDVATLTTVVRQAFAMRRKTLRNTLKQLITVDALQSLDIDPQIRPERLGLPEFVRIADYVYDHPLENES.

S-adenosyl-L-methionine is bound by residues N19, L21, G46, E67, D92, and N113.

Belongs to the class I-like SAM-binding methyltransferase superfamily. rRNA adenine N(6)-methyltransferase family. RsmA subfamily.

The protein localises to the cytoplasm. It carries out the reaction adenosine(1518)/adenosine(1519) in 16S rRNA + 4 S-adenosyl-L-methionine = N(6)-dimethyladenosine(1518)/N(6)-dimethyladenosine(1519) in 16S rRNA + 4 S-adenosyl-L-homocysteine + 4 H(+). In terms of biological role, specifically dimethylates two adjacent adenosines (A1518 and A1519) in the loop of a conserved hairpin near the 3'-end of 16S rRNA in the 30S particle. May play a critical role in biogenesis of 30S subunits. This is Ribosomal RNA small subunit methyltransferase A from Hahella chejuensis (strain KCTC 2396).